An 816-amino-acid polypeptide reads, in one-letter code: Molybdenum cofactor sulfurase (816 aa).

Lysine 273 carries the N6-(pyridoxal phosphate)lysine modification. Cysteine 427 is a catalytic residue. Positions 647-812 (NSDSQSHSCI…IRVGEEIIPN (166 aa)) constitute an MOSC domain.

This sequence belongs to the class-V pyridoxal-phosphate-dependent aminotransferase family. MOCOS subfamily. It depends on pyridoxal 5'-phosphate as a cofactor. In terms of tissue distribution, ubiquitously expressed.

It catalyses the reaction Mo-molybdopterin + L-cysteine + AH2 = thio-Mo-molybdopterin + L-alanine + A + H2O. The protein operates within cofactor biosynthesis; molybdopterin biosynthesis. Functionally, sulfurates the molybdenum cofactor. Sulfation of molybdenum is essential for xanthine dehydrogenase (XDH) and aldehyde oxidase (ADO) enzymes in which molybdenum cofactor is liganded by 1 oxygen and 1 sulfur atom in active form. The chain is Molybdenum cofactor sulfurase (FLACCA) from Solanum lycopersicum (Tomato).